The chain runs to 546 residues: FAD-dependent monooxygenase (546 aa).

Positions 1–17 (MYDVIVVGAGWCGLAAA) are cleaved as a signal peptide. Position 106 (Ile106) interacts with FAD. Asn239 and Asn343 each carry an N-linked (GlcNAc...) asparagine glycan.

Belongs to the FAD-binding monooxygenase family. Requires FAD as cofactor.

It functions in the pathway antifungal biosynthesis. Its function is as follows. FAD-dependent monooxygenase; part of the gene cluster that mediates the biosynthesis of the tetrahydropyranyl antifungal agent lanomycin that acts as an inhibitor of CYP51 and blocks the ergosterol biosynthesis. The biosynthesis probably begins with the formation of an hexaketide, followed by methionine mediated alkylation of C-2 and C-6, and methylation of the reduced C-3 oxygen, pyran forming reductive ring closure, oxygenation of C-4, beta-keto reduction, enoyl reduction and dehydration of the remaining oxygens, and finally, acylation with glycine to complete the biosynthesis. This is FAD-dependent monooxygenase from Pyrenophora dematioidea (Helminthosporium dematioideum).